Consider the following 258-residue polypeptide: 5'-nucleotidase SurE (258 aa).

Positions 9, 10, 42, and 96 each coordinate a divalent metal cation.

It belongs to the SurE nucleotidase family. A divalent metal cation is required as a cofactor.

Its subcellular location is the cytoplasm. It carries out the reaction a ribonucleoside 5'-phosphate + H2O = a ribonucleoside + phosphate. Functionally, nucleotidase that shows phosphatase activity on nucleoside 5'-monophosphates. The polypeptide is 5'-nucleotidase SurE (Campylobacter jejuni subsp. doylei (strain ATCC BAA-1458 / RM4099 / 269.97)).